The primary structure comprises 192 residues: Xanthine phosphoribosyltransferase (192 aa).

Residues Leu20 and Asn27 each contribute to the xanthine site. Residue 128-132 participates in 5-phospho-alpha-D-ribose 1-diphosphate binding; it reads ANGDA. Residue Lys156 coordinates xanthine.

This sequence belongs to the purine/pyrimidine phosphoribosyltransferase family. Xpt subfamily. Homodimer.

The protein localises to the cytoplasm. The catalysed reaction is XMP + diphosphate = xanthine + 5-phospho-alpha-D-ribose 1-diphosphate. It functions in the pathway purine metabolism; XMP biosynthesis via salvage pathway; XMP from xanthine: step 1/1. In terms of biological role, converts the preformed base xanthine, a product of nucleic acid breakdown, to xanthosine 5'-monophosphate (XMP), so it can be reused for RNA or DNA synthesis. The sequence is that of Xanthine phosphoribosyltransferase from Staphylococcus epidermidis (strain ATCC 35984 / DSM 28319 / BCRC 17069 / CCUG 31568 / BM 3577 / RP62A).